The sequence spans 407 residues: Probable protein S-acyltransferase 9 (407 aa).

2 helical membrane-spanning segments follow: residues 28–48 (WSIPFTFLLIITPVCFFSVFV) and 62–82 (GHVFLVAGVLFTVFVLILLFL). Positions 136–179 (KYCDTCMLYRPPRCSHCSICNNCVERFDHHCPWRNYRYFFMFVS) constitute a DHHC domain. Cysteine 166 (S-palmitoyl cysteine intermediate) is an active-site residue. The next 2 helical transmembrane spans lie at 174-194 (FFMFVSSATILCIYIFSMSAL) and 217-237 (AVMLMIYCFISLWFVGGLTGF). The tract at residues 300 to 407 (LATTWERPEE…RSYAAAEEGR (108 aa)) is disordered. Positions 346-356 (DTAHHKIDIDQ) are enriched in basic and acidic residues.

Belongs to the DHHC palmitoyltransferase family. As to expression, mainly expressed in seeds.

The protein localises to the cell membrane. The enzyme catalyses L-cysteinyl-[protein] + hexadecanoyl-CoA = S-hexadecanoyl-L-cysteinyl-[protein] + CoA. Functionally, palmitoyl acyltransferase. This is Probable protein S-acyltransferase 9 (PAT09) from Arabidopsis thaliana (Mouse-ear cress).